The following is a 48-amino-acid chain: uncharacterized protein (48 aa).

This is an uncharacterized protein from Treponema pallidum (strain Nichols).